Here is a 124-residue protein sequence, read N- to C-terminus: Large ribosomal subunit protein bL12 (124 aa).

It belongs to the bacterial ribosomal protein bL12 family. As to quaternary structure, homodimer. Part of the ribosomal stalk of the 50S ribosomal subunit. Forms a multimeric L10(L12)X complex, where L10 forms an elongated spine to which 2 to 4 L12 dimers bind in a sequential fashion. Binds GTP-bound translation factors.

Its function is as follows. Forms part of the ribosomal stalk which helps the ribosome interact with GTP-bound translation factors. Is thus essential for accurate translation. The polypeptide is Large ribosomal subunit protein bL12 (Anaeromyxobacter dehalogenans (strain 2CP-C)).